The primary structure comprises 175 residues: RNA pyrophosphohydrolase (175 aa).

Residues 6–150 (GFRPNVGIVI…KREVYRRVMK (145 aa)) form the Nudix hydrolase domain. Residues 38–59 (GGVDDGETPEQAMYRELYEEIG) carry the Nudix box motif.

The protein belongs to the Nudix hydrolase family. RppH subfamily. Requires a divalent metal cation as cofactor.

Its function is as follows. Accelerates the degradation of transcripts by removing pyrophosphate from the 5'-end of triphosphorylated RNA, leading to a more labile monophosphorylated state that can stimulate subsequent ribonuclease cleavage. This is RNA pyrophosphohydrolase from Aeromonas hydrophila subsp. hydrophila (strain ATCC 7966 / DSM 30187 / BCRC 13018 / CCUG 14551 / JCM 1027 / KCTC 2358 / NCIMB 9240 / NCTC 8049).